A 252-amino-acid chain; its full sequence is NLP effector protein Pc118356 (252 aa).

The first 17 residues, 1 to 17 (MALTVLAATALTALIMG), serve as a signal peptide directing secretion. N-linked (GlcNAc...) asparagine glycans are attached at residues asparagine 20 and asparagine 67. The short motif at 121–127 (QDRHFWE) is the Hepta-peptide GHRHDWE motif element. The N-linked (GlcNAc...) asparagine glycan is linked to asparagine 166.

It belongs to the Necrosis inducing protein (NPP1) family.

The protein localises to the secreted. Its function is as follows. Secreted effector that contributes strongly to virulence during infection by P.capsici. The polypeptide is NLP effector protein Pc118356 (Phytophthora capsici).